The sequence spans 259 residues: HTH-type quorum sensing-dependent transcriptional regulator VjbR (259 aa).

Positions 76–179 (KNYFAIDPVF…AGIIHGTVCG (104 aa)) are C12-HSL binding. Positions 183 to 248 (ANSVASLLTP…SAVATALSLG (66 aa)) constitute an HTH luxR-type domain. A DNA-binding region (H-T-H motif) is located at residues 207-226 (DGEIAEILSIARWTVVTYLQ).

Transcriptional regulator involved in the global control of Brucella gene expression. Mediates the effects of the quorum sensing autoinducer C12-HSL (N-dodecanoyl-homoserine lactone) on a large and diverse number of genes. This chain is HTH-type quorum sensing-dependent transcriptional regulator VjbR (vjbR), found in Brucella suis biovar 1 (strain 1330).